We begin with the raw amino-acid sequence, 130 residues long: Small ribosomal subunit protein bS6 (130 aa).

The tract at residues 100-130 (SPMVKAKDERRERREDFAEAGDDVDAGDSEE) is disordered. Over residues 104 to 116 (KAKDERRERREDF) the composition is skewed to basic and acidic residues. Acidic residues predominate over residues 117–130 (AEAGDDVDAGDSEE).

This sequence belongs to the bacterial ribosomal protein bS6 family.

Binds together with bS18 to 16S ribosomal RNA. In Pectobacterium carotovorum subsp. carotovorum (strain PC1), this protein is Small ribosomal subunit protein bS6.